Here is a 414-residue protein sequence, read N- to C-terminus: Putative polyketide beta-ketoacyl synthase 2 (414 aa).

In terms of domain architecture, Ketosynthase family 3 (KS3) spans 4–407; that stretch reads PRRAVVTGLG…GNNSALVLRR (404 aa).

Belongs to the thiolase-like superfamily. Beta-ketoacyl-ACP synthases family.

Functionally, involved in developmentally regulated synthesis of a compound biosynthetically related to polyketide antibiotics which is essential for spore color in Streptomyces halstedii. The sequence is that of Putative polyketide beta-ketoacyl synthase 2 (sch2) from Streptomyces halstedii.